We begin with the raw amino-acid sequence, 532 residues long: MYPVDGIRSQIEWNTTLNVSDAPVPTETTKYHRKTAIIATIGPKINTVEKLTDVRLAGVNIVRMNFSHGTHEYHQSVIDNTRQMIKNDPHGRPVAIALDTKGPEIRTGQTRDGNDYPIKAGDEFIVTTDPKYSDICDNKVLFVDYANLASVTAPGKLIYIDDGIISLLILSIDGMNLHVRALNNGTLSSRKGVNLPKTDVDLPPLSEKDKDDLRFGIRNGVDMIFASFIRRGEDVRQIREVLGPDGASIKIIVKIENEQGVANFDEILKEADGVMVARGDLGIEIPASQVFLAQKMMIAKCNIVGKPVIVATQMLESMTYNPRPTRAEVSDVANAVLDGSDCVMLSGETAKGSYPVQSVLMMAETCLLAETAICYPPLYDDLRAVQARPTETAETVAIAAVAAAAEQDAKALLVLSTSGETARLVSKYRPKIPIITVTRNEQTARQIHLHRGCYPFWYPEPRGVQNHQWQTDVDNRIRFGLRNALALNVIQPGASIIAVQGWKGGLGHTNTLRILTVPTDPADLELQPLGSL.

Arginine 63 serves as a coordination point for substrate. 4 residues coordinate K(+): asparagine 65, serine 67, aspartate 99, and threonine 100. 65–68 is an ATP binding site; that stretch reads NFSH. The ATP site is built by arginine 106 and lysine 191. Position 256 (glutamate 256) interacts with Mg(2+). The substrate site is built by glycine 279, aspartate 280, and threonine 312. Aspartate 280 contacts Mg(2+).

The protein belongs to the pyruvate kinase family. In terms of assembly, homotetramer. Mg(2+) is required as a cofactor. Requires K(+) as cofactor.

The enzyme catalyses pyruvate + ATP = phosphoenolpyruvate + ADP + H(+). The protein operates within carbohydrate degradation; glycolysis; pyruvate from D-glyceraldehyde 3-phosphate: step 5/5. In Agaricus bisporus (White button mushroom), this protein is Pyruvate kinase (pkiA).